Reading from the N-terminus, the 514-residue chain is Probable type III restriction-modification enzyme HindVIP Res subunit (514 aa).

The protein belongs to the type III restriction-modification system Res protein family. In terms of assembly, contains two different subunits: Res and Mod. The cofactor is Mg(2+). S-adenosyl-L-methionine is required as a cofactor.

It catalyses the reaction Endonucleolytic cleavage of DNA to give specific double-stranded fragments with terminal 5'-phosphates.. Its function is as follows. A type III restriction enzyme that recognizes 2 inversely oriented double-stranded sequences 5'-CGAAT-3' and cleaves 25-27 base pairs downstream. After binding to one recognition site undergoes random one-dimensional diffusion along DNA until it collides with a stationary enzyme bound to the second DNA site, which is when DNA cleavage occurs. DNA restriction requires both the Res and Mod subunits. The protein is Probable type III restriction-modification enzyme HindVIP Res subunit of Haemophilus influenzae (strain ATCC 51907 / DSM 11121 / KW20 / Rd).